Here is a 251-residue protein sequence, read N- to C-terminus: Segregation and condensation protein A (251 aa).

The protein belongs to the ScpA family. As to quaternary structure, component of a cohesin-like complex composed of ScpA, ScpB and the Smc homodimer, in which ScpA and ScpB bind to the head domain of Smc. The presence of the three proteins is required for the association of the complex with DNA.

The protein localises to the cytoplasm. Functionally, participates in chromosomal partition during cell division. May act via the formation of a condensin-like complex containing Smc and ScpB that pull DNA away from mid-cell into both cell halves. The protein is Segregation and condensation protein A of Exiguobacterium sibiricum (strain DSM 17290 / CCUG 55495 / CIP 109462 / JCM 13490 / 255-15).